A 78-amino-acid chain; its full sequence is Omega-conotoxin-like VnMKLT1-0111 (78 aa).

The N-terminal stretch at 1–22 (MKLTCMMIVAVLFLTAWTFVTA) is a signal peptide. Residues 23 to 48 (DSRNGLEYLFPKAHYEMNPEASKLNK) constitute a propeptide that is removed on maturation. 3 disulfide bridges follow: Cys52–Cys69, Cys59–Cys73, and Cys68–Cys77.

Belongs to the conotoxin O1 superfamily. In terms of tissue distribution, expressed by the venom duct.

The protein resides in the secreted. In terms of biological role, omega-conotoxins act at presynaptic membranes, they bind and block voltage-gated calcium channels (Cav). In Conus ventricosus (Mediterranean cone), this protein is Omega-conotoxin-like VnMKLT1-0111.